The following is a 1402-amino-acid chain: Roundabout homolog 3 (1402 aa).

An N-terminal signal peptide occupies residues M1–A20. Residues R21–P891 are Extracellular-facing. 3 N-linked (GlcNAc...) asparagine glycosylation sites follow: N25, N34, and N53. 5 Ig-like C2-type domains span residues P64–E160, D166–V253, P258–S342, P347–E440, and P450–T531. A disulfide bridge links C85 with C143. A glycan (N-linked (GlcNAc...) asparagine) is linked at N156. Cystine bridges form between C187–C236 and C279–C326. 5 N-linked (GlcNAc...) asparagine glycosylation sites follow: N355, N363, N410, N459, and N503. Residues C368 and C424 are joined by a disulfide bond. An intrachain disulfide couples C472 to C521. Disordered regions lie at residues E540 to Q561 and E639 to W662. Residues G543 to P552 are compositionally biased toward low complexity. Fibronectin type-III domains lie at P558 to S652, A672 to E766, and P771 to A869. Positions P646–S655 are enriched in polar residues. 3 N-linked (GlcNAc...) asparagine glycosylation sites follow: N784, N813, and N820. Residues A892–L912 form a helical membrane-spanning segment. At Y913–R1402 the chain is on the cytoplasmic side. Disordered stretches follow at residues S965–P989, F1032–A1307, and G1340–R1402. 2 stretches are compositionally biased toward polar residues: residues Q1038–Q1049 and P1142–S1152. A compositionally biased stretch (pro residues) spans P1158 to D1169. Composition is skewed to low complexity over residues R1178–S1191 and A1215–P1228. Over residues H1243–K1254 the composition is skewed to basic residues. S1263 is subject to Phosphoserine. The span at L1294 to V1304 shows a compositional bias: basic and acidic residues. A compositionally biased stretch (polar residues) spans S1346–A1357. Low complexity predominate over residues G1358–S1371.

The protein belongs to the immunoglobulin superfamily. ROBO family. As to quaternary structure, interacts (via Fibronectin type-III 1 domain) with NELL2 (via the EGF domains) with a 3:3 stoichiometry; this interaction promotes oligomerization of ROBO3 resulting in the repulsion of commissural axons in the midline. In terms of tissue distribution, detected in embryonal spinal cord and hindbrain.

It is found in the membrane. In terms of biological role, receptor involved in axon guidance during development. Acts as a multifunctional regulator of pathfinding that simultaneously mediates NELL2 repulsion, inhibits SLIT repulsion, and facilitates Netrin-1/NTN1 attraction. In spinal cord development plays a role in guiding commissural axons probably by preventing premature sensitivity to Slit proteins thus inhibiting Slit signaling through ROBO1/ROBO2. Binding OF NELL2 to the receptor ROBO3 promotes oligomerization of ROBO3, resulting in the repulsion of commissural axons in the midline. ROBO3 also indirectly boosts axon attraction to NTN1 without interacting with NTN1 itself. Functionally, mediates NELL2 premature repulsion of commissural axons during midline crossing. Its function is as follows. After midline crossing by the commissural axons, may, in concert with ROBO1 and ROBO2, prevent midline recrossing. Does not mediate NELL2 signaling. In Mus musculus (Mouse), this protein is Roundabout homolog 3.